The sequence spans 224 residues: Myogenin (224 aa).

Residues Ser77 and Ser79 each carry the phosphoserine; by CaMK2G modification. A bHLH domain is found at 81-132; the sequence is DRRRAATLREKRRLKKVNEAFEALKRSTLLNPNQRLPKVEILRSAIQYIERL. Position 87 is a phosphothreonine; by CaMK2G (Thr87).

As to quaternary structure, homodimer and heterodimer with E12; heterodimerization enhances MYOG DNA-binding and transcriptional activities. Interacts with SMARCA4/BRG1/BAF190A. Interacts (via C-terminal region) with SSRP1 and SUPT16H; the interaction is indicative of an interaction with the FACT complex. Interacts with CSRP3. Phosphorylated by CAMK2G on threonine and serine amino acids in a muscle activity-dependent manner. Phosphorylation of Thr-87 impairs both DNA-binding and trans-activation functions in contracting muscles.

It localises to the nucleus. In terms of biological role, acts as a transcriptional activator that promotes transcription of muscle-specific target genes and plays a role in muscle differentiation, cell cycle exit and muscle atrophy. Essential for the development of functional embryonic skeletal fiber muscle differentiation. However is dispensable for postnatal skeletal muscle growth; phosphorylation by CAMK2G inhibits its transcriptional activity in respons to muscle activity. Required for the recruitment of the FACT complex to muscle-specific promoter regions, thus promoting gene expression initiation. During terminal myoblast differentiation, plays a role as a strong activator of transcription at loci with an open chromatin structure previously initiated by MYOD1. Together with MYF5 and MYOD1, co-occupies muscle-specific gene promoter core regions during myogenesis. Also cooperates with myocyte-specific enhancer factor MEF2D and BRG1-dependent recruitment of SWI/SNF chromatin-remodeling enzymes to alter chromatin structure at myogenic late gene promoters. Facilitates cell cycle exit during terminal muscle differentiation through the up-regulation of miR-20a expression, which in turn represses genes involved in cell cycle progression. Binds to the E-box containing (E1) promoter region of the miR-20a gene. Also plays a role in preventing reversal of muscle cell differentiation. Contributes to the atrophy-related gene expression in adult denervated muscles. Induces fibroblasts to differentiate into myoblasts. This is Myogenin (MYOG) from Bos taurus (Bovine).